A 625-amino-acid polypeptide reads, in one-letter code: Vitamin B12 transporter BtuB (625 aa).

The first 21 residues, 1–21 (MTIKKYTLLTALSVTAFSGWA), serve as a signal peptide directing secretion. The TonB box signature appears at 31-38 (DEMVVTAN). The TBDR plug domain maps to 43–157 (PKSSVLAPVD…IGGVINILTG (115 aa)). Residues Ser-90, Asn-97, and 115-116 (IT) contribute to the cyanocob(III)alamin site. A TBDR beta-barrel domain is found at 160 to 625 (KPGTTLSAGL…EYYFTGSYNF (466 aa)). 3 consecutive transmembrane segments (beta stranded) span residues 163–170 (TTLSAGLG), 174–183 (YQTYDGSTQQ), and 189–200 (TTVTLAGNYTYS). Residues Asp-204, Gln-217, Asp-219, and Asp-221 each contribute to the Ca(2+) site. Transmembrane regions (beta stranded) follow at residues 223 to 233 (FMGKMLWAGLE) and 238 to 254 (EQFN…NRSD). Tyr-255, Asp-256, and Asp-269 together coordinate Ca(2+). 14 beta stranded membrane passes run 271–285 (RKLS…LRYK), 287–304 (GIYA…KDYN), 317–333 (SLDE…NTFQ), 336–345 (NGMISAGADW), 363–379 (FTQH…QQIS), 381–391 (VTLEGAVRSDD), 395–410 (FGWH…WEFI), 413–427 (YRLI…KAPN), 445–454 (ESKQWEGGVE), 460–469 (LTWRLSAYRN), 484–501 (YFNI…TGSF), 505–520 (PLSH…PRNA), 528–540 (RRAK…QLDW), and 546–561 (DWSV…YDKD). Ser-317 provides a ligand contact to cyanocob(III)alamin. Arg-528 is a binding site for cyanocob(III)alamin. Tyr-562 contacts cyanocob(III)alamin. The next 3 membrane-spanning stretches (beta stranded) occupy residues 569 to 583 (TVEL…LAVS), 596 to 607 (IANLFDKDYEMV), and 613 to 625 (PGRE…SYNF). A TonB C-terminal box motif is present at residues 608 to 625 (YGYQTPGREYYFTGSYNF).

It belongs to the TonB-dependent receptor family. BtuB (TC 1.B.14.3.1) subfamily.

It is found in the cell outer membrane. Its function is as follows. Involved in the active translocation of vitamin B12 (cyanocobalamin) across the outer membrane to the periplasmic space. It derives its energy for transport by interacting with the trans-periplasmic membrane protein TonB. This chain is Vitamin B12 transporter BtuB, found in Yersinia pestis bv. Antiqua (strain Antiqua).